A 250-amino-acid polypeptide reads, in one-letter code: 5-oxoprolinase subunit A (250 aa).

This sequence belongs to the LamB/PxpA family. In terms of assembly, forms a complex composed of PxpA, PxpB and PxpC.

The enzyme catalyses 5-oxo-L-proline + ATP + 2 H2O = L-glutamate + ADP + phosphate + H(+). In terms of biological role, catalyzes the cleavage of 5-oxoproline to form L-glutamate coupled to the hydrolysis of ATP to ADP and inorganic phosphate. The polypeptide is 5-oxoprolinase subunit A (Streptomyces coelicolor (strain ATCC BAA-471 / A3(2) / M145)).